A 185-amino-acid polypeptide reads, in one-letter code: Homeobox-leucine zipper protein ATHB-22 (185 aa).

Positions 76–135 (TSEQLKFLERSFQEEIKLNPDRKMKLNPDRKMKLSKELGLQPRQIAVWFQNRKARWKNKQ) form a DNA-binding region, homeobox. Positions 136–164 (LEHLYESLRQEFDIVSREKELLQEELIQL) are leucine-zipper.

This sequence belongs to the HD-ZIP homeobox family. Class I subfamily. As to expression, expressed in siliques.

The protein resides in the nucleus. Functionally, probable transcription factor. The sequence is that of Homeobox-leucine zipper protein ATHB-22 (ATHB-22) from Arabidopsis thaliana (Mouse-ear cress).